A 191-amino-acid chain; its full sequence is NADH-quinone oxidoreductase subunit B (191 aa).

Cys-52, Cys-53, Cys-118, and Cys-148 together coordinate [4Fe-4S] cluster.

This sequence belongs to the complex I 20 kDa subunit family. As to quaternary structure, NDH-1 is composed of 14 different subunits. Subunits NuoB, C, D, E, F, and G constitute the peripheral sector of the complex. Requires [4Fe-4S] cluster as cofactor.

The protein resides in the cell inner membrane. The enzyme catalyses a quinone + NADH + 5 H(+)(in) = a quinol + NAD(+) + 4 H(+)(out). In terms of biological role, NDH-1 shuttles electrons from NADH, via FMN and iron-sulfur (Fe-S) centers, to quinones in the respiratory chain. The immediate electron acceptor for the enzyme in this species is believed to be a menaquinone. Couples the redox reaction to proton translocation (for every two electrons transferred, four hydrogen ions are translocated across the cytoplasmic membrane), and thus conserves the redox energy in a proton gradient. In Azobacteroides pseudotrichonymphae genomovar. CFP2, this protein is NADH-quinone oxidoreductase subunit B.